The following is a 195-amino-acid chain: NADH-quinone oxidoreductase subunit B (195 aa).

[4Fe-4S] cluster is bound by residues C74, C75, C139, and C169.

It belongs to the complex I 20 kDa subunit family. As to quaternary structure, NDH-1 is composed of 14 different subunits. Subunits NuoB, C, D, E, F, and G constitute the peripheral sector of the complex. [4Fe-4S] cluster serves as cofactor.

The protein localises to the cell inner membrane. The enzyme catalyses a quinone + NADH + 5 H(+)(in) = a quinol + NAD(+) + 4 H(+)(out). Its function is as follows. NDH-1 shuttles electrons from NADH, via FMN and iron-sulfur (Fe-S) centers, to quinones in the respiratory chain. The immediate electron acceptor for the enzyme in this species is believed to be ubiquinone. Couples the redox reaction to proton translocation (for every two electrons transferred, four hydrogen ions are translocated across the cytoplasmic membrane), and thus conserves the redox energy in a proton gradient. This is NADH-quinone oxidoreductase subunit B from Methylobacterium sp. (strain 4-46).